The chain runs to 182 residues: ATP-dependent protease subunit HslV (182 aa).

Threonine 10 is a catalytic residue. 3 residues coordinate Na(+): alanine 166, cysteine 169, and serine 172.

It belongs to the peptidase T1B family. HslV subfamily. In terms of assembly, a double ring-shaped homohexamer of HslV is capped on each side by a ring-shaped HslU homohexamer. The assembly of the HslU/HslV complex is dependent on binding of ATP.

The protein resides in the cytoplasm. The catalysed reaction is ATP-dependent cleavage of peptide bonds with broad specificity.. Allosterically activated by HslU binding. In terms of biological role, protease subunit of a proteasome-like degradation complex believed to be a general protein degrading machinery. The chain is ATP-dependent protease subunit HslV from Rickettsia africae (strain ESF-5).